Reading from the N-terminus, the 123-residue chain is Small ribosomal subunit protein uS12 (123 aa).

Positions methionine 1–proline 28 are disordered. Positions arginine 9–serine 21 are enriched in basic residues. 3-methylthioaspartic acid is present on aspartate 89.

Belongs to the universal ribosomal protein uS12 family. In terms of assembly, part of the 30S ribosomal subunit. Contacts proteins S8 and S17. May interact with IF1 in the 30S initiation complex.

In terms of biological role, with S4 and S5 plays an important role in translational accuracy. Its function is as follows. Interacts with and stabilizes bases of the 16S rRNA that are involved in tRNA selection in the A site and with the mRNA backbone. Located at the interface of the 30S and 50S subunits, it traverses the body of the 30S subunit contacting proteins on the other side and probably holding the rRNA structure together. The combined cluster of proteins S8, S12 and S17 appears to hold together the shoulder and platform of the 30S subunit. The sequence is that of Small ribosomal subunit protein uS12 from Ruegeria pomeroyi (strain ATCC 700808 / DSM 15171 / DSS-3) (Silicibacter pomeroyi).